A 240-amino-acid chain; its full sequence is Large ribosomal subunit protein bL25 (240 aa).

Disordered stretches follow at residues 1–23 and 207–240; these read MATV…ARAE and PAAA…AKKK.

The protein belongs to the bacterial ribosomal protein bL25 family. CTC subfamily. In terms of assembly, part of the 50S ribosomal subunit; part of the 5S rRNA/L5/L18/L25 subcomplex. Contacts the 5S rRNA. Binds to the 5S rRNA independently of L5 and L18.

Its function is as follows. This is one of the proteins that binds to the 5S RNA in the ribosome where it forms part of the central protuberance. This Rhodopseudomonas palustris (strain BisB18) protein is Large ribosomal subunit protein bL25.